Consider the following 287-residue polypeptide: Acetyl-coenzyme A carboxylase carboxyl transferase subunit beta (287 aa).

In terms of domain architecture, CoA carboxyltransferase N-terminal spans 25–287; that stretch reads VWTKCSACEQ…KMLNTHVIEE (263 aa). The Zn(2+) site is built by Cys29, Cys32, Cys48, and Cys51. Residues 29-51 form a C4-type zinc finger; the sequence is CSACEQVLYRAELERNLEVCPKC.

It belongs to the AccD/PCCB family. Acetyl-CoA carboxylase is a heterohexamer composed of biotin carboxyl carrier protein (AccB), biotin carboxylase (AccC) and two subunits each of ACCase subunit alpha (AccA) and ACCase subunit beta (AccD). The cofactor is Zn(2+).

It localises to the cytoplasm. The enzyme catalyses N(6)-carboxybiotinyl-L-lysyl-[protein] + acetyl-CoA = N(6)-biotinyl-L-lysyl-[protein] + malonyl-CoA. Its pathway is lipid metabolism; malonyl-CoA biosynthesis; malonyl-CoA from acetyl-CoA: step 1/1. In terms of biological role, component of the acetyl coenzyme A carboxylase (ACC) complex. Biotin carboxylase (BC) catalyzes the carboxylation of biotin on its carrier protein (BCCP) and then the CO(2) group is transferred by the transcarboxylase to acetyl-CoA to form malonyl-CoA. In Aeromonas hydrophila subsp. hydrophila (strain ATCC 7966 / DSM 30187 / BCRC 13018 / CCUG 14551 / JCM 1027 / KCTC 2358 / NCIMB 9240 / NCTC 8049), this protein is Acetyl-coenzyme A carboxylase carboxyl transferase subunit beta.